The sequence spans 187 residues: UPF0301 protein GOX1459 (187 aa).

This sequence belongs to the UPF0301 (AlgH) family.

The protein is UPF0301 protein GOX1459 of Gluconobacter oxydans (strain 621H) (Gluconobacter suboxydans).